Consider the following 1006-residue polypeptide: MSRPASSTPPGRPQPRRGALTPTLIVVALVVVGFIFFANVWTDVLWYQQLGFFEVFLTENLARIIIFLAGFALMFVAMFYAIRIAYHARPVYAPDSEIRDNLNRYQAQLEPVRRVVMIGLPVLFGLFAGSAAASQWQKVLLFLNQEPFGQNDPQFNLDISFYLMTLPFLGFVTGFLISVVVVAGIAGILTHYLYGSIRIMERGIFTSRAAQIHLAVTGAVFLLLLGVNFWLDRYSSVQNSNGRWAGALYTDVNAVIPTKSILAVAAALVAILFIVAAVIGKWRLPVIGTAMLVITSILAGGVYPWVIQQFQVRPSEQTLERQFIERNISMTRAAYGLDKIQEKRYNATTNATTGALAPDAQTTANIRLLDPNLISDAFSQLEQYRPYYQFPSALNVDRYEVDGKVQDTVIAVRELNPDGLSANQQSWLNRHVVYTHGYGVVAAKGNKFTADGKPEFLQAGIPSTGVLGNDSTYQPRIYFGENSPEYSIVGAPEGSPHREQDRPAGKEGDGETQYTFTGNGGPNVGSFFNKVLYAIKFQSSDLLLSDGVNAESQILYDRNPRDRVEKVAPYLTVDGNAYPAVVDGRVKWIVDGYTTSQYYPYSQQEQLSAATADSQTTAGRTVALPNSSVNYIRNSVKATVDAYDGSVTLYAWDDQDPVLKAWQNVFPTSLKPYSEMSGALMSHVRYPEDLFKVQRELLGRYHVTQPDNFYTNNDAWSVPNDPTVKEEVKQPPFYMSLQMPDQDKPAFQLTSSFIPQVVNGTARNVLYGFLAADSDAGNQKGVKAESYGQLRLLQIPPEAQVPGPGQAQNKFNSDPTVSQALNLLRQGASAVLNGNLLTLPVGGGLLYVQPVYLRSTGETSYPTLQRVLVAFGDKIGFAPTLDEALNQLFGGQSGAKAGDFANNGQTPPPAAGGSTPPATGGTDAKAELKAALDEANAAIRAGQEALAKGDFAAYGEQQKKLSAALQKAIDAEAKLGSEGASPTPGATTAPTATPSAAATPSPSPSN.

The next 7 helical transmembrane spans lie at 18–38, 64–84, 115–135, 168–188, 211–231, 260–280, and 287–307; these read GALT…IFFA, IIIF…AIRI, VVMI…AASQ, FLGF…IAGI, QIHL…NFWL, SILA…AVIG, and IGTA…PWVI. 3 disordered regions span residues 490–519, 896–923, and 975–1006; these read GAPE…FTGN, KAGD…GGTD, and LGSE…SPSN. Residues 495–509 are compositionally biased toward basic and acidic residues; that stretch reads SPHREQDRPAGKEGD. Composition is skewed to low complexity over residues 911 to 923 and 979 to 1000; these read AGGS…GGTD and GASP…AATP.

Belongs to the UPF0182 family.

It is found in the cell membrane. This Arthrobacter sp. (strain FB24) protein is UPF0182 protein Arth_2749.